The following is a 466-amino-acid chain: Ribulose bisphosphate carboxylase large chain (466 aa).

Lys5 is modified (N6,N6,N6-trimethyllysine). 2 residues coordinate substrate: Asn114 and Thr164. The active-site Proton acceptor is Lys166. Lys168 contributes to the substrate binding site. Residues Lys192, Asp194, and Glu195 each contribute to the Mg(2+) site. Lys192 bears the N6-carboxylysine mark. Residue His285 is the Proton acceptor of the active site. Residues Arg286, His318, and Ser370 each contribute to the substrate site.

Belongs to the RuBisCO large chain family. Type I subfamily. As to quaternary structure, heterohexadecamer of 8 large chains and 8 small chains; disulfide-linked. The disulfide link is formed within the large subunit homodimers. Requires Mg(2+) as cofactor. The disulfide bond which can form in the large chain dimeric partners within the hexadecamer appears to be associated with oxidative stress and protein turnover.

Its subcellular location is the plastid. The protein resides in the chloroplast. The catalysed reaction is 2 (2R)-3-phosphoglycerate + 2 H(+) = D-ribulose 1,5-bisphosphate + CO2 + H2O. The enzyme catalyses D-ribulose 1,5-bisphosphate + O2 = 2-phosphoglycolate + (2R)-3-phosphoglycerate + 2 H(+). Its function is as follows. RuBisCO catalyzes two reactions: the carboxylation of D-ribulose 1,5-bisphosphate, the primary event in carbon dioxide fixation, as well as the oxidative fragmentation of the pentose substrate in the photorespiration process. Both reactions occur simultaneously and in competition at the same active site. This Thespesia populnea (Portia tree) protein is Ribulose bisphosphate carboxylase large chain.